The following is a 501-amino-acid chain: Protein disulfide isomerase-like 1-1 (501 aa).

Positions 1-23 (MAMRGFTLFSILVLSLCASSIRS) are cleaved as a signal peptide. The Thioredoxin 1 domain occupies 24–141 (EETETKEFVL…IVTYLKKQSG (118 aa)). N-linked (GlcNAc...) asparagine glycosylation is present at asparagine 39. Residues cysteine 59 and cysteine 62 each act as nucleophile in the active site. Cysteine 59 and cysteine 62 are joined by a disulfide. Asparagine 275 carries an N-linked (GlcNAc...) asparagine glycan. In terms of domain architecture, Thioredoxin 2 spans 354 to 482 (FKDGKIAPHK…FISFVDKNKD (129 aa)). Active-site nucleophile residues include cysteine 404 and cysteine 407. A disulfide bond links cysteine 404 and cysteine 407. The Prevents secretion from ER motif lies at 498–501 (KDEL).

It belongs to the protein disulfide isomerase family. As to quaternary structure, interacts with RD21A, At3g19390, At5g43060. In terms of tissue distribution, highly expressed in flowers, stems and immature seeds, and at lower levels in leaves and siliques (at protein level).

The protein resides in the endoplasmic reticulum lumen. It localises to the vacuole. It catalyses the reaction Catalyzes the rearrangement of -S-S- bonds in proteins.. Functionally, protein disulfide isomerase that associates with RD21A protease for trafficking from the ER through the Golgi to lytic and protein storage vacuoles of endothelial cells in developing seeds. Regulates the timing of programmed cell death (PCD) of the endothelial cells by chaperoning and inhibiting cysteine proteases during their trafficking to vacuoles. This chain is Protein disulfide isomerase-like 1-1 (PDIL1-1), found in Arabidopsis thaliana (Mouse-ear cress).